The sequence spans 396 residues: Tyrosine--tRNA ligase (396 aa).

Positions 42–51 match the 'HIGH' region motif; it reads PTAPDIHLGH. The 'KMSKS' region motif lies at 226-230; sequence KMSKS. Position 229 (lysine 229) interacts with ATP. The S4 RNA-binding domain maps to 334 to 395; it reads LPIANLLKEA…GKRKFAKIII (62 aa).

It belongs to the class-I aminoacyl-tRNA synthetase family. TyrS type 2 subfamily. Homodimer.

It is found in the cytoplasm. It carries out the reaction tRNA(Tyr) + L-tyrosine + ATP = L-tyrosyl-tRNA(Tyr) + AMP + diphosphate + H(+). Its function is as follows. Catalyzes the attachment of tyrosine to tRNA(Tyr) in a two-step reaction: tyrosine is first activated by ATP to form Tyr-AMP and then transferred to the acceptor end of tRNA(Tyr). In Francisella tularensis subsp. tularensis (strain SCHU S4 / Schu 4), this protein is Tyrosine--tRNA ligase.